We begin with the raw amino-acid sequence, 459 residues long: tRNA uridine(34) acetyltransferase (459 aa).

The radical S-adenosyl-L-methionine (rSAM) stretch occupies residues 1–278 (MKKLSRTISG…VPPYVRISRV (278 aa)). In terms of domain architecture, Radical SAM core spans 6-271 (RTISGVTPVA…IADIKALVPP (266 aa)). [4Fe-4S] cluster-binding residues include cysteine 23, cysteine 27, and cysteine 30. Lysine 77 is an acetyl-CoA binding site. The segment at 308-459 (QKCRCIRCRE…VAGYMCKHLD (152 aa)) is N-acetyltransferase. Residues cysteine 310, cysteine 312, and cysteine 315 each coordinate Zn(2+). Acetyl-CoA is bound by residues 386-389 (ELHV), 409-411 (LGR), and tyrosine 442.

It belongs to the ELP3 family. Homodimer. It depends on [4Fe-4S] cluster as a cofactor.

The enzyme catalyses uridine(34) in tRNA + acetyl-CoA + S-adenosyl-L-methionine + H2O = 5-(carboxymethyl)uridine(34) in tRNA + 5'-deoxyadenosine + L-methionine + CoA + 2 H(+). The protein operates within tRNA modification. TRNA uridine(34) acetyltransferase, which mediates formation of carboxymethyluridine in the wobble base at position 34 in tRNAs. The proposed mechanism is the following: (i) recruits S-adenosyl-L-methionine and cleaves it to generate a 5'-deoxyadenosine radical (5'-dA) in the radical S-adenosyl-L-methionine (rSAM) region, (ii) hydrolyzes acetyl-CoA in the N-acetyltransferase domain and (iii) an acetyl radical is formed by the products of the two domains and (iv) is transferred onto the C5 position of uridine(34) in the bound tRNA molecule. Does not show protein lysine acetyltransferase activity. This is tRNA uridine(34) acetyltransferase from Dehalococcoides mccartyi (strain CBDB1).